The following is a 506-amino-acid chain: Cobyric acid synthase (506 aa).

One can recognise a GATase cobBQ-type domain in the interval 260 to 453 (KVGVAAIYFP…FHGIFNEPAV (194 aa)). C341 serves as the catalytic Nucleophile. The active site involves H445.

This sequence belongs to the CobB/CobQ family. CobQ subfamily.

The protein operates within cofactor biosynthesis; adenosylcobalamin biosynthesis. Functionally, catalyzes amidations at positions B, D, E, and G on adenosylcobyrinic A,C-diamide. NH(2) groups are provided by glutamine, and one molecule of ATP is hydrogenolyzed for each amidation. This Chlorobium chlorochromatii (strain CaD3) protein is Cobyric acid synthase.